A 410-amino-acid chain; its full sequence is FBD-associated F-box protein At5g38590 (410 aa).

Residues 1–47 (MDKINGLPDDLLVKILSYVPTDIAVSTSILSKRWEFLWMWLPNLDYT) enclose the F-box domain. The FBD domain maps to 335 to 385 (GWNQPSSVPECLLSSLQIFKWPQYLGRPEDRDIAVYILKNARHLKKTTILA).

This Arabidopsis thaliana (Mouse-ear cress) protein is FBD-associated F-box protein At5g38590.